The primary structure comprises 163 residues: MTEQATNGAADEQQPQFSLQRIYLRDLSFESPKSPEIFRQEWNPSISLDLNTRQKQLDGDFYEVVLTVSVTVKNGEDTTAFIAEVQQAGIFLIKNLDPSSMSHTLGAFCPNILFPYAREALDNLVVRGSFPALMLSPVNFDALYAQEIARMQASGEIPTPSVQ.

This sequence belongs to the SecB family. As to quaternary structure, homotetramer, a dimer of dimers. One homotetramer interacts with 1 SecA dimer.

The protein resides in the cytoplasm. In terms of biological role, one of the proteins required for the normal export of preproteins out of the cell cytoplasm. It is a molecular chaperone that binds to a subset of precursor proteins, maintaining them in a translocation-competent state. It also specifically binds to its receptor SecA. This chain is Protein-export protein SecB, found in Pseudomonas aeruginosa (strain LESB58).